The primary structure comprises 518 residues: GRIN2-like protein (518 aa).

Disordered stretches follow at residues 1–23 (MGLESVVQTMNNQSPDNNSQSRT) and 467–500 (QTEPAQQTGKSDEDPLNKEPSSDKMEKKRPFRTM). The segment covering 476 to 494 (KSDEDPLNKEPSSDKMEKK) has biased composition (basic and acidic residues).

As to quaternary structure, may interact with GNAO1.

In terms of biological role, may be involved in neurite outgrowth. This is GRIN2-like protein from Gallus gallus (Chicken).